Consider the following 508-residue polypeptide: Photosystem II CP47 reaction center protein (508 aa).

Transmembrane regions (helical) follow at residues 21–36, 101–115, 140–156, 203–218, 237–252, and 457–472; these read SVHI…WAGS, IVFS…IWHW, GIHL…FGAF, IAAG…FHLS, VLSS…AFVV, and SFAL…HGSR.

Belongs to the PsbB/PsbC family. PsbB subfamily. As to quaternary structure, PSII is composed of 1 copy each of membrane proteins PsbA, PsbB, PsbC, PsbD, PsbE, PsbF, PsbH, PsbI, PsbJ, PsbK, PsbL, PsbM, PsbT, PsbX, PsbY, PsbZ, Psb30/Ycf12, at least 3 peripheral proteins of the oxygen-evolving complex and a large number of cofactors. It forms dimeric complexes. Binds multiple chlorophylls. PSII binds additional chlorophylls, carotenoids and specific lipids. serves as cofactor.

The protein resides in the plastid. The protein localises to the chloroplast thylakoid membrane. In terms of biological role, one of the components of the core complex of photosystem II (PSII). It binds chlorophyll and helps catalyze the primary light-induced photochemical processes of PSII. PSII is a light-driven water:plastoquinone oxidoreductase, using light energy to abstract electrons from H(2)O, generating O(2) and a proton gradient subsequently used for ATP formation. The chain is Photosystem II CP47 reaction center protein from Capsella bursa-pastoris (Shepherd's purse).